The chain runs to 1522 residues: Histone-lysine N-methyltransferase EZH2 (1522 aa).

The disordered stretch occupies residues 1-196 (MSPARGDANA…PKTPTPKNTE (196 aa)). Basic and acidic residues predominate over residues 39 to 61 (NRENLRDRDRADKLEKLEKDAHA). 2 stretches are compositionally biased toward low complexity: residues 64 to 76 (QTQT…PVTV) and 103 to 130 (RGST…SPSL). Polar residues predominate over residues 141-162 (ILASRTSRFSNRTGIRDSQSPS). Residues 180–195 (ATSNTPAPKTPTPKNT) show a composition bias toward low complexity. The SBD domain stretch occupies residues 190–220 (PTPKNTEWTVDKIASALSVLAEEVPQNHSRL). The interval 221–250 (VNFLLEETEKRAPQPRHLSKTDPFAHMKSK) is EBD domain. Residues 251 to 300 (AIDANRPRPEGVPTMDVKFKQHSGEYGKSRNSGRRFQYPVVCIKPDREPV) are BAM domain. Positions 301–320 (PPYRFHHAEIRKNILALNSQ) are SAL domain. Residues 321 to 360 (LNFVPHLRDVDPNSAEEQKYSAWLMDLENLDSKSGFKIQP) form an SRM domain region. An SANT1L domain region spans residues 361 to 480 (RSQKIAKRAQ…PIFDNKRAKD (120 aa)). Residues 406–426 (PESDDSMTPQQKSNLLDTYSD) form a disordered region. A compositionally biased stretch (polar residues) spans 411–422 (SMTPQQKSNLLD). The MCSS domain stretch occupies residues 481 to 560 (APGSQKPPDE…EQRQKTEGGS (80 aa)). Zn(2+) contacts are provided by cysteine 508, cysteine 511, cysteine 516, histidine 518, cysteine 570, cysteine 574, cysteine 615, cysteine 625, cysteine 685, histidine 687, cysteine 691, cysteine 697, cysteine 699, cysteine 709, cysteine 713, cysteine 715, cysteine 720, cysteine 727, cysteine 729, cysteine 736, cysteine 746, cysteine 748, cysteine 755, cysteine 760, cysteine 763, and cysteine 784. Residues 561 to 650 (ANAPPAHPPC…PVEPRTIPKQ (90 aa)) form an SANT2L domain region. A CXC domain is found at 658-780 (RRKKQLMSDW…PENAYDEVLH (123 aa)). An SET domain is found at 795–919 (KAVVLGKSQL…AGEELFFNYG (125 aa)). Positions 809, 852, 854, and 855 each coordinate S-adenosyl-L-homocysteine. Tyrosine 809, lysine 852, serine 854, tyrosine 855, asparagine 880, histidine 881, and threonine 926 together coordinate S-adenosyl-L-methionine. Histidine 881 serves as a coordination point for S-adenosyl-L-homocysteine. Lysine 927 lines the S-adenosyl-L-homocysteine pocket. The interval 933–1522 (NEQSGAETTP…KPARYRDEGE (590 aa)) is disordered. The span at 935–946 (QSGAETTPQQPK) shows a compositional bias: polar residues. The segment covering 971-988 (GFDDDDRDGNDSDPDDLW) has biased composition (acidic residues). Over residues 992–1024 (QQQQQQQQQQQQQQQQQQQQQQQQQQQQQQQQQ) the composition is skewed to low complexity. Over residues 1025–1038 (AQKPQPSTSHQPQS) the composition is skewed to polar residues. Residues 1053-1066 (SPDKQLRRENHDAQ) show a composition bias toward basic and acidic residues. Low complexity predominate over residues 1072-1091 (QFQQQEQQQQQQQQQQQQQQ). The span at 1127–1136 (DSSSGGSANE) shows a compositional bias: polar residues. Residues 1142-1162 (KPSRRGGARPGAGRKPKHRPP) are compositionally biased toward basic residues. Basic and acidic residues-rich tracts occupy residues 1207-1221 (SDSK…TDKE) and 1228-1238 (VNEKDREKGRD). Residues 1255 to 1299 (KSAPSPAKKQASSPTKISDSNRTTSKNTSSNNNNNTNNNNNNNNN) show a composition bias toward low complexity. The span at 1316–1330 (HLTNSQPAALSPSAT) shows a compositional bias: polar residues. Low complexity-rich tracts occupy residues 1355–1385 (STMT…SSSS) and 1415–1428 (SSSL…SVFS). The span at 1455-1464 (SGLNSTSLSQ) shows a compositional bias: polar residues. Basic and acidic residues predominate over residues 1465–1494 (ERGEKHEKHEKEKPKEKKGEKERERERDRS).

This sequence belongs to the class V-like SAM-binding methyltransferase superfamily. Histone-lysine methyltransferase family. EZ subfamily. Component of the polycomb repressive complex 2 (PRC2) that consists of four core subunits icluding EZH2, EED, SUZ12, and RBBP4, among which EZH2 is the catalytic subunit and which minimally requires EED and SUZ12 for catalysis.

The protein resides in the nucleus. It catalyses the reaction L-lysyl(27)-[histone H3] + 3 S-adenosyl-L-methionine = N(6),N(6),N(6)-trimethyl-L-lysyl(27)-[histone H3] + 3 S-adenosyl-L-homocysteine + 3 H(+). Its activity is regulated as follows. The end product of PRC2 catalysis, H3K27me3, interacts with EED to stimulate the enzymatic activity of PRC2 allosterically. The enzymatic activity of PRC2 is regulated in a very complex manner and PCR2 can adopt different stages including the autoinhibited (A); SAM-bound autoinhibited (A'), basal (B), and H3K27me3-stimulated (S) stages. Actictivity is inhibited by pyridone inhibitors such as GSK126. Catalytic subunit of the of the Polycomb Repressive Complex 2 (PRC2), a histone H3 lysine methyltransferase responsible for generating mono-, di-, and tri-methylation on Lys27 (H3K27me1, H3K27me2 and H3K27me3). The tri-methylated form is known to be critical in gene repression, and its proper placement is essential in defining repression patterns during development. The PRC2 complex interacts with thousands of RNA species in vivo, but the physiological function of RNA binding has still to be determined. The protein is Histone-lysine N-methyltransferase EZH2 of Chaetomium thermophilum (strain DSM 1495 / CBS 144.50 / IMI 039719) (Thermochaetoides thermophila).